A 184-amino-acid polypeptide reads, in one-letter code: Protein GrpE (184 aa).

Residues 1-24 (MADEQLDEKNLNSEEAGAVNGDAR) are disordered.

Belongs to the GrpE family. Homodimer.

Its subcellular location is the cytoplasm. Functionally, participates actively in the response to hyperosmotic and heat shock by preventing the aggregation of stress-denatured proteins, in association with DnaK and GrpE. It is the nucleotide exchange factor for DnaK and may function as a thermosensor. Unfolded proteins bind initially to DnaJ; upon interaction with the DnaJ-bound protein, DnaK hydrolyzes its bound ATP, resulting in the formation of a stable complex. GrpE releases ADP from DnaK; ATP binding to DnaK triggers the release of the substrate protein, thus completing the reaction cycle. Several rounds of ATP-dependent interactions between DnaJ, DnaK and GrpE are required for fully efficient folding. This chain is Protein GrpE, found in Pseudomonas entomophila (strain L48).